A 118-amino-acid polypeptide reads, in one-letter code: Large ribosomal subunit protein bL20 (118 aa).

This sequence belongs to the bacterial ribosomal protein bL20 family.

Binds directly to 23S ribosomal RNA and is necessary for the in vitro assembly process of the 50S ribosomal subunit. It is not involved in the protein synthesizing functions of that subunit. This is Large ribosomal subunit protein bL20 from Lactobacillus johnsonii (strain CNCM I-12250 / La1 / NCC 533).